A 150-amino-acid polypeptide reads, in one-letter code: SsrA-binding protein (150 aa).

It belongs to the SmpB family.

The protein resides in the cytoplasm. Required for rescue of stalled ribosomes mediated by trans-translation. Binds to transfer-messenger RNA (tmRNA), required for stable association of tmRNA with ribosomes. tmRNA and SmpB together mimic tRNA shape, replacing the anticodon stem-loop with SmpB. tmRNA is encoded by the ssrA gene; the 2 termini fold to resemble tRNA(Ala) and it encodes a 'tag peptide', a short internal open reading frame. During trans-translation Ala-aminoacylated tmRNA acts like a tRNA, entering the A-site of stalled ribosomes, displacing the stalled mRNA. The ribosome then switches to translate the ORF on the tmRNA; the nascent peptide is terminated with the 'tag peptide' encoded by the tmRNA and targeted for degradation. The ribosome is freed to recommence translation, which seems to be the essential function of trans-translation. This is SsrA-binding protein from Borreliella burgdorferi (strain ATCC 35210 / DSM 4680 / CIP 102532 / B31) (Borrelia burgdorferi).